We begin with the raw amino-acid sequence, 851 residues long: Leucine--tRNA ligase (851 aa).

Residues 51-61 carry the 'HIGH' region motif; it reads PYPSGDLHMGH. A 'KMSKS' region motif is present at residues 615-619; the sequence is KMSKS. ATP is bound at residue Lys-618.

The protein belongs to the class-I aminoacyl-tRNA synthetase family.

Its subcellular location is the cytoplasm. It carries out the reaction tRNA(Leu) + L-leucine + ATP = L-leucyl-tRNA(Leu) + AMP + diphosphate. The protein is Leucine--tRNA ligase of Clavibacter michiganensis subsp. michiganensis (strain NCPPB 382).